A 257-amino-acid polypeptide reads, in one-letter code: UPF0246 protein CPS_4102 (257 aa).

It belongs to the UPF0246 family.

This chain is UPF0246 protein CPS_4102, found in Colwellia psychrerythraea (strain 34H / ATCC BAA-681) (Vibrio psychroerythus).